Here is a 28-residue protein sequence, read N- to C-terminus: Seed allergenic protein 1 (28 aa).

A disordered region spans residues Val-1–Met-28.

The chain is Seed allergenic protein 1 from Prunus dulcis (Almond).